Here is a 513-residue protein sequence, read N- to C-terminus: Ribonuclease Y (513 aa).

A helical transmembrane segment spans residues 6-26 (YIIIAVVIIIICVILGLYVVD). Residues 203-288 (TVHVVNLPND…EMVEKAKKEV (86 aa)) enclose the KH domain. In terms of domain architecture, HD spans 329–422 (VLKHSIEVSH…VQAADAISAA (94 aa)).

The protein belongs to the RNase Y family.

It is found in the cell membrane. In terms of biological role, endoribonuclease that initiates mRNA decay. In Clostridium botulinum (strain Langeland / NCTC 10281 / Type F), this protein is Ribonuclease Y.